The chain runs to 426 residues: Serine--tRNA ligase (426 aa).

235 to 237 (TAE) provides a ligand contact to L-serine. Residues 266 to 268 (RRE) and valine 282 contribute to the ATP site. Glutamate 289 is a binding site for L-serine. ATP is bound at residue 353 to 356 (EASS). Serine 389 is an L-serine binding site.

It belongs to the class-II aminoacyl-tRNA synthetase family. Type-1 seryl-tRNA synthetase subfamily. In terms of assembly, homodimer. The tRNA molecule binds across the dimer.

The protein localises to the cytoplasm. The catalysed reaction is tRNA(Ser) + L-serine + ATP = L-seryl-tRNA(Ser) + AMP + diphosphate + H(+). The enzyme catalyses tRNA(Sec) + L-serine + ATP = L-seryl-tRNA(Sec) + AMP + diphosphate + H(+). Its pathway is aminoacyl-tRNA biosynthesis; selenocysteinyl-tRNA(Sec) biosynthesis; L-seryl-tRNA(Sec) from L-serine and tRNA(Sec): step 1/1. Its function is as follows. Catalyzes the attachment of serine to tRNA(Ser). Is also able to aminoacylate tRNA(Sec) with serine, to form the misacylated tRNA L-seryl-tRNA(Sec), which will be further converted into selenocysteinyl-tRNA(Sec). The polypeptide is Serine--tRNA ligase (Chlorobium chlorochromatii (strain CaD3)).